Here is a 204-residue protein sequence, read N- to C-terminus: Probable UbiX-like flavin prenyltransferase (204 aa).

FMN contacts are provided by residues 21–23, serine 47, 98–101, and arginine 133; these read GAT and SMKS.

The protein belongs to the UbiX/PAD1 family. YclB subfamily. Homododecamer.

It carries out the reaction dimethylallyl phosphate + FMNH2 = prenylated FMNH2 + phosphate. Involved in the non-oxidative decarboxylation and detoxification of phenolic derivatives under both aerobic and anaerobic conditions. Flavin prenyltransferase that catalyzes the synthesis of the prenylated FMN cofactor (prenyl-FMN) for phenolic acid decarboxylase. This Bacillus subtilis (strain 168) protein is Probable UbiX-like flavin prenyltransferase.